Here is a 150-residue protein sequence, read N- to C-terminus: Cytochrome c oxidase subunit 5A, mitochondrial (150 aa).

The N-terminal 41 residues, 1–41, are a transit peptide targeting the mitochondrion; it reads MLGAALRRCAVAATAWAGPRGLLHSAPTPGPAAAIHSVRCY. An SIFI-degron motif is present at residues 2-17; it reads LGAALRRCAVAATAWA. An N6-acetyllysine mark is found at lysine 87 and lysine 113. Phosphothreonine is present on threonine 141.

This sequence belongs to the cytochrome c oxidase subunit 5A family. In terms of assembly, component of the cytochrome c oxidase (complex IV, CIV), a multisubunit enzyme composed of 14 subunits. The complex is composed of a catalytic core of 3 subunits MT-CO1, MT-CO2 and MT-CO3, encoded in the mitochondrial DNA, and 11 supernumerary subunits COX4I, COX5A, COX5B, COX6A, COX6B, COX6C, COX7A, COX7B, COX7C, COX8 and NDUFA4, which are encoded in the nuclear genome. The complex exists as a monomer or a dimer and forms supercomplexes (SCs) in the inner mitochondrial membrane with NADH-ubiquinone oxidoreductase (complex I, CI) and ubiquinol-cytochrome c oxidoreductase (cytochrome b-c1 complex, complex III, CIII), resulting in different assemblies (supercomplex SCI(1)III(2)IV(1) and megacomplex MCI(2)III(2)IV(2)). Interacts with AFG1L. Interacts with RAB5IF. Post-translationally, in response to mitochondrial stress, the precursor protein is ubiquitinated by the SIFI complex in the cytoplasm before mitochondrial import, leading to its degradation. Within the SIFI complex, UBR4 initiates ubiquitin chain that are further elongated or branched by KCMF1.

The protein localises to the mitochondrion inner membrane. It participates in energy metabolism; oxidative phosphorylation. In terms of biological role, component of the cytochrome c oxidase, the last enzyme in the mitochondrial electron transport chain which drives oxidative phosphorylation. The respiratory chain contains 3 multisubunit complexes succinate dehydrogenase (complex II, CII), ubiquinol-cytochrome c oxidoreductase (cytochrome b-c1 complex, complex III, CIII) and cytochrome c oxidase (complex IV, CIV), that cooperate to transfer electrons derived from NADH and succinate to molecular oxygen, creating an electrochemical gradient over the inner membrane that drives transmembrane transport and the ATP synthase. Cytochrome c oxidase is the component of the respiratory chain that catalyzes the reduction of oxygen to water. Electrons originating from reduced cytochrome c in the intermembrane space (IMS) are transferred via the dinuclear copper A center (CU(A)) of subunit 2 and heme A of subunit 1 to the active site in subunit 1, a binuclear center (BNC) formed by heme A3 and copper B (CU(B)). The BNC reduces molecular oxygen to 2 water molecules using 4 electrons from cytochrome c in the IMS and 4 protons from the mitochondrial matrix. This Saimiri sciureus (Common squirrel monkey) protein is Cytochrome c oxidase subunit 5A, mitochondrial (COX5A).